A 186-amino-acid chain; its full sequence is MDKKLKSKSKFLSLVLRHQPELIQLPLDANGWADIEVLLAGAARQGVNISLQDVLEIVATNDKQRFALSGDKRRIRASQGHSIDVDLQLTPVTPPDELYHGSATRFTDAILATGLQPGQRRHVHLSADVETAHKVGSRHGKPVIFRIDAKALTLAGHAFYLSANQVWLTDAVPPQYLSLLDTSPQG.

Belongs to the KptA/TPT1 family.

Removes the 2'-phosphate from RNA via an intermediate in which the phosphate is ADP-ribosylated by NAD followed by a presumed transesterification to release the RNA and generate ADP-ribose 1''-2''-cyclic phosphate (APPR&gt;P). May function as an ADP-ribosylase. The protein is Probable RNA 2'-phosphotransferase of Hahella chejuensis (strain KCTC 2396).